A 1077-amino-acid chain; its full sequence is Rap guanine nucleotide exchange factor 1 (1077 aa).

Residue Leu57 forms a Glycyl lysine isopeptide (Lys-Gly) (interchain with G-Cter in SUMO2) linkage. 2 disordered regions span residues 207 to 235 and 248 to 300; these read IEKQ…AELP and TGMS…PTRV. Residues 213–228 show a composition bias toward low complexity; it reads PSPTSPVKPSSPASKP. A phosphoserine mark is found at Ser281, Ser293, Ser314, Ser335, and Ser360. Residues 281–292 carry the SH3-binding motif; sequence SPPPALPPKKRQ. 2 disordered regions span residues 336–376 and 411–494; these read GGSH…QCSR and LSPL…EDLQ. Residues 358-371 show a composition bias toward basic and acidic residues; the sequence is SKSDEQLSSLDRDS. The SH3-binding signature appears at 451–462; sequence DTPPALPEKKRR. The segment covering 484–494 has biased composition (polar residues); that stretch reads QYDNISGEDLQ. Phosphotyrosine; by HCK is present on Tyr504. Short sequence motifs (SH3-binding) lie at residues 538 to 549 and 606 to 617; these read EKPPPLPEKKNK and APPPALPPKQRQ. The interval 600-670 is disordered; sequence DSVQELAPPP…SEEEVDELSL (71 aa). Residues 640–651 are compositionally biased toward basic and acidic residues; it reads KDSRDGSERAPK. A compositionally biased stretch (acidic residues) spans 660-669; it reads QSEEEVDELS. An N-terminal Ras-GEF domain is found at 688–810; that stretch reads DGPDVRGGSG…LRKNILDKVD (123 aa). One can recognise a Ras-GEF domain in the interval 840–1064; that stretch reads HSHEIAEQLT…WELSLKIKPR (225 aa).

Interacts with HCK (via SH3-binding sites). Interacts with CRK (via SH3-binding sites). In terms of processing, phosphorylation at Tyr-504 enhances activity as Rap guanine nucleotide exchange factor. As to expression, ubiquitously expressed in adult and fetus. Expression is high in adult skeletal muscle and placenta and in fetal brain and heart. Low levels of expression in adult and fetal liver.

It is found in the early endosome. In terms of biological role, guanine nucleotide-releasing protein that binds to SH3 domain of CRK and GRB2/ASH. Transduces signals from CRK to activate RAS. Involved in cell branching and adhesion mediated by BCAR1-CRK-RAPGEF1 signaling and activation of RAP1. Plays a role in the establishment of basal endothelial barrier function. Plays a role in nerve growth factor (NGF)-induced sustained activation of Rap1 and neurite outgrowth. This chain is Rap guanine nucleotide exchange factor 1 (RAPGEF1), found in Homo sapiens (Human).